The sequence spans 872 residues: Alanine--tRNA ligase (872 aa).

Zn(2+) is bound by residues histidine 567, histidine 571, cysteine 669, and histidine 673.

It belongs to the class-II aminoacyl-tRNA synthetase family. The cofactor is Zn(2+).

Its subcellular location is the cytoplasm. The enzyme catalyses tRNA(Ala) + L-alanine + ATP = L-alanyl-tRNA(Ala) + AMP + diphosphate. Catalyzes the attachment of alanine to tRNA(Ala) in a two-step reaction: alanine is first activated by ATP to form Ala-AMP and then transferred to the acceptor end of tRNA(Ala). Also edits incorrectly charged Ser-tRNA(Ala) and Gly-tRNA(Ala) via its editing domain. In Streptococcus suis (strain 98HAH33), this protein is Alanine--tRNA ligase.